Reading from the N-terminus, the 331-residue chain is DSC E3 ubiquitin ligase complex subunit D (331 aa).

N-linked (GlcNAc...) asparagine glycosylation occurs at Asn-26. 3 helical membrane-spanning segments follow: residues 63–83 (ILIY…ILFA), 107–127 (PFIG…NFFT), and 159–179 (LFLL…LIVE). The segment at 188-225 (STTSTEILRVQDHDSEERGVHRTRPESRSSVVGAELDE) is disordered. Residues 196–214 (RVQDHDSEERGVHRTRPES) are compositionally biased toward basic and acidic residues.

Component of the DSC E3 ubiquitin ligase complex composed of dscA, dscB, dscC and dscD.

It is found in the endoplasmic reticulum membrane. The protein operates within protein modification; protein ubiquitination. Its function is as follows. Component of the DSC E3 ubiquitin ligase complex which is required for the srbA transcriptional activator proteolytic cleavage to release the soluble transcription factor from the membrane in low oxygen or sterol conditions. Required for growth during hypoxia and triazole drug susceptibility, as well as for virulence in a murine model of invasive pulmonary aspergillosis (IPA). The chain is DSC E3 ubiquitin ligase complex subunit D from Aspergillus fumigatus (strain ATCC MYA-4609 / CBS 101355 / FGSC A1100 / Af293) (Neosartorya fumigata).